Here is a 154-residue protein sequence, read N- to C-terminus: Phospholipase A2 OS1 (154 aa).

The first 27 residues, 1–27, serve as a signal peptide directing secretion; that stretch reads MHPAHLLVLLAVCVSLLGAARIPPLPL. 7 cysteine pairs are disulfide-bonded: cysteine 38/cysteine 104, cysteine 54/cysteine 153, cysteine 56/cysteine 72, cysteine 71/cysteine 132, cysteine 78/cysteine 125, cysteine 88/cysteine 118, and cysteine 111/cysteine 123. Positions 57 and 59 each coordinate Ca(2+). Histidine 75 is a catalytic residue. Aspartate 76 lines the Ca(2+) pocket. The active site involves aspartate 126.

It belongs to the phospholipase A2 family. Group I subfamily. D49 sub-subfamily. Monomer. Ca(2+) is required as a cofactor. Expressed by the venom gland.

The protein resides in the secreted. The catalysed reaction is a 1,2-diacyl-sn-glycero-3-phosphocholine + H2O = a 1-acyl-sn-glycero-3-phosphocholine + a fatty acid + H(+). In terms of biological role, snake venom phospholipase A2 (PLA2) that has a low specific activity on phospholipid substrates, and is neither neurotoxic, nor myotoxic. Induces endothelial cell migration which is mediated, at least in part, by its hydrolytic products. Shows antimalarial activity, but is not able to potently inhibit HIV-1 replication. Binds in a calcium-independent fashion with very high affinity to a muscle-type (M-type) PLA2 receptor, but is a very poor ligand for neuronal-type (N-type) receptors. PLA2 catalyzes the calcium-dependent hydrolysis of the 2-acyl groups in 3-sn-phosphoglycerides. The chain is Phospholipase A2 OS1 from Oxyuranus scutellatus scutellatus (Australian taipan).